Reading from the N-terminus, the 533-residue chain is Tyrosine/DOPA decarboxylase 3 (533 aa).

At lysine 319 the chain carries N6-(pyridoxal phosphate)lysine.

It belongs to the group II decarboxylase family. As to quaternary structure, homodimer. Pyridoxal 5'-phosphate is required as a cofactor. As to expression, roots.

The enzyme catalyses L-tyrosine + H(+) = tyramine + CO2. The catalysed reaction is L-dopa + H(+) = dopamine + CO2. It catalyses the reaction 5-hydroxy-L-tryptophan + H(+) = serotonin + CO2. Its function is as follows. Marginally higher substrate specificity for L-DOPA over L-tyrosine. The protein is Tyrosine/DOPA decarboxylase 3 (TYDC3) of Papaver somniferum (Opium poppy).